Consider the following 332-residue polypeptide: Malate dehydrogenase (332 aa).

NAD(+)-binding positions include 16 to 17 (QI), Asp43, and Gly90. Arg99 lines the oxaloacetate pocket. NAD(+)-binding residues include Gln113 and Asn132. The oxaloacetate site is built by Asn132, Arg163, His188, and Ser243. The active-site Proton acceptor is His188.

The protein belongs to the LDH/MDH superfamily. MDH type 2 family. As to quaternary structure, homodimer.

The protein resides in the cytoplasm. It catalyses the reaction (S)-malate + NAD(+) = oxaloacetate + NADH + H(+). Its function is as follows. Catalyzes the reduction of the carbonyl group of oxalacetic acid. No activity with pulegone. This chain is Malate dehydrogenase (MD1), found in Nicotiana tabacum (Common tobacco).